Consider the following 553-residue polypeptide: Hydroxylamine reductase (553 aa).

Positions 3, 6, 18, and 25 each coordinate [2Fe-2S] cluster. Residues histidine 252, glutamate 276, cysteine 320, cysteine 408, cysteine 436, cysteine 461, glutamate 495, and lysine 497 each contribute to the hybrid [4Fe-2O-2S] cluster site. The residue at position 408 (cysteine 408) is a Cysteine persulfide.

This sequence belongs to the HCP family. Requires [2Fe-2S] cluster as cofactor. The cofactor is hybrid [4Fe-2O-2S] cluster.

The protein localises to the cytoplasm. The catalysed reaction is A + NH4(+) + H2O = hydroxylamine + AH2 + H(+). Catalyzes the reduction of hydroxylamine to form NH(3) and H(2)O. The polypeptide is Hydroxylamine reductase (Vibrio parahaemolyticus serotype O3:K6 (strain RIMD 2210633)).